A 446-amino-acid polypeptide reads, in one-letter code: CBL-interacting serine/threonine-protein kinase 24 (446 aa).

The Protein kinase domain maps to 11 to 264; it reads YEVGRTIGEG…IQGIKKDPWF (254 aa). Residues 17–25 and Lys-40 each bind ATP; that span reads IGEGTFAKV. Asp-134 (proton acceptor) is an active-site residue. The tract at residues 152-179 is activation loop; sequence DFGLSALPQEGVELLRTTCGTPNYVAPE. At Ser-156 the chain carries Phosphoserine. Thr-168 carries the phosphothreonine modification. The NAF domain maps to 305-329; that stretch reads EGPLMMNAFEMITLSQGLNLSALFD. Residues 336–365 form a PPI region; it reads KRQTRFVSRREPSEIIANIEAVANSMGFKS.

It belongs to the protein kinase superfamily. CAMK Ser/Thr protein kinase family. SNF1 subfamily. As to quaternary structure, interacts with CBL1, CBL2, CBL4/SOS3, CBL5, CBL9, CBL10 and with the protein phosphatase 2C ABI2. Mn(2+) serves as cofactor. Post-translationally, autophosphorylated.

Its subcellular location is the cytoplasm. It localises to the nucleus. The enzyme catalyses L-seryl-[protein] + ATP = O-phospho-L-seryl-[protein] + ADP + H(+). It carries out the reaction L-threonyl-[protein] + ATP = O-phospho-L-threonyl-[protein] + ADP + H(+). Involved in the regulatory pathway for the control of intracellular Na(+) and K(+) homeostasis and salt tolerance. Activates the vacuolar H(+)/Ca(2+) antiporter CAX1 and operates in synergy with CBL4/SOS3 to activate the plasma membrane Na(+)/H(+) antiporter SOS1. CIPK serine-threonine protein kinases interact with CBL proteins. Binding of a CBL protein to the regulatory NAF domain of CIPK protein lead to the activation of the kinase in a calcium-dependent manner. Phosphorylates CBL1, CBL4 and CBL10. The polypeptide is CBL-interacting serine/threonine-protein kinase 24 (CIPK24) (Arabidopsis thaliana (Mouse-ear cress)).